The primary structure comprises 215 residues: Probable GTP-binding protein EngB (215 aa).

Residues 30–204 (EGLEVAFAGR…QMVLAQWLGL (175 aa)) form the EngB-type G domain. Residues 38 to 45 (GRSNAGKS), 64 to 68 (GRTQL), 82 to 85 (DLPG), 149 to 152 (TKAD), and 182 to 185 (LFSA) each bind GTP. Residues S45 and T66 each contribute to the Mg(2+) site.

It belongs to the TRAFAC class TrmE-Era-EngA-EngB-Septin-like GTPase superfamily. EngB GTPase family. Mg(2+) is required as a cofactor.

Necessary for normal cell division and for the maintenance of normal septation. This Pseudomonas aeruginosa (strain ATCC 15692 / DSM 22644 / CIP 104116 / JCM 14847 / LMG 12228 / 1C / PRS 101 / PAO1) protein is Probable GTP-binding protein EngB.